The primary structure comprises 429 residues: Gamma-glutamyl phosphate reductase (429 aa).

The protein belongs to the gamma-glutamyl phosphate reductase family.

The protein localises to the cytoplasm. The catalysed reaction is L-glutamate 5-semialdehyde + phosphate + NADP(+) = L-glutamyl 5-phosphate + NADPH + H(+). It participates in amino-acid biosynthesis; L-proline biosynthesis; L-glutamate 5-semialdehyde from L-glutamate: step 2/2. Functionally, catalyzes the NADPH-dependent reduction of L-glutamate 5-phosphate into L-glutamate 5-semialdehyde and phosphate. The product spontaneously undergoes cyclization to form 1-pyrroline-5-carboxylate. The chain is Gamma-glutamyl phosphate reductase from Rhizorhabdus wittichii (strain DSM 6014 / CCUG 31198 / JCM 15750 / NBRC 105917 / EY 4224 / RW1) (Sphingomonas wittichii).